The following is a 360-amino-acid chain: Phospho-N-acetylmuramoyl-pentapeptide-transferase (360 aa).

Transmembrane regions (helical) follow at residues 26–46 (AILG…WVIN), 70–90 (GTPT…TLLW), 97–117 (YVLA…VDDY), 134–154 (YFWQ…TAQI), 167–187 (GVAL…VVGF), 199–219 (GLAI…AYLV), 236–256 (AGEL…FLWF), 263–283 (VFMG…IAVI), 288–308 (IVFI…ILQV), and 338–358 (VIVR…ATLK).

Belongs to the glycosyltransferase 4 family. MraY subfamily. Mg(2+) serves as cofactor.

It is found in the cell inner membrane. The enzyme catalyses UDP-N-acetyl-alpha-D-muramoyl-L-alanyl-gamma-D-glutamyl-meso-2,6-diaminopimeloyl-D-alanyl-D-alanine + di-trans,octa-cis-undecaprenyl phosphate = di-trans,octa-cis-undecaprenyl diphospho-N-acetyl-alpha-D-muramoyl-L-alanyl-D-glutamyl-meso-2,6-diaminopimeloyl-D-alanyl-D-alanine + UMP. The protein operates within cell wall biogenesis; peptidoglycan biosynthesis. Functionally, catalyzes the initial step of the lipid cycle reactions in the biosynthesis of the cell wall peptidoglycan: transfers peptidoglycan precursor phospho-MurNAc-pentapeptide from UDP-MurNAc-pentapeptide onto the lipid carrier undecaprenyl phosphate, yielding undecaprenyl-pyrophosphoryl-MurNAc-pentapeptide, known as lipid I. The protein is Phospho-N-acetylmuramoyl-pentapeptide-transferase of Saccharophagus degradans (strain 2-40 / ATCC 43961 / DSM 17024).